Here is a 690-residue protein sequence, read N- to C-terminus: Calpain-9 (690 aa).

The interval 1-24 is disordered; sequence MPYLHRSLRPQPQPVPRDARTVHS. One can recognise a Calpain catalytic domain in the interval 42 to 337; it reads LFEDADFPAS…FDKVEICNLT (296 aa). L81, G83, and D88 together coordinate Ca(2+). Residue C97 is part of the active site. E167 lines the Ca(2+) pocket. Catalysis depends on residues H254 and N278. Ca(2+) contacts are provided by E284, D291, L312, D314, and E316. The interval 338 to 521 is domain III; it reads PDALEDNTLH…PQEEETEEER (184 aa). The segment at 522–690 is domain IV; it reads QFRALFRRIA…NEFINLTMNI (169 aa). EF-hand domains lie at 534-552, 561-589, and 591-626; these read DMEVSAEELEYVLNAVLQK, LSLLSCRNIISLMDTSGNGKMEFEEFRVF, and DKLRYWMDLFLQFDVDKSGTMSSYELRTALKAAGFQ. Ca(2+)-binding residues include D574, S576, N578, K580, E585, D604, D606, S608, T610, and E615.

The protein belongs to the peptidase C2 family. Predominantly expressed in stomach and small intestine, although low levels of expression in other organs.

Functionally, calcium-regulated non-lysosomal thiol-protease. This is Calpain-9 (Capn9) from Rattus norvegicus (Rat).